The primary structure comprises 286 residues: Aminoglycoside N(3)-acetyltransferase III (286 aa).

The protein belongs to the antibiotic N-acetyltransferase family.

It carries out the reaction a 2-deoxystreptamine antibiotic + acetyl-CoA = an N(3)-acetyl-2-deoxystreptamine antibiotic + CoA + H(+). Resistance to antibiotics containing the 2-deoxy-streptamine ring including gentamicin, kanamycin, tobramycin, neomycin and apramycin. This Salmonella sp protein is Aminoglycoside N(3)-acetyltransferase III (aacC3).